The sequence spans 642 residues: Threonine--tRNA ligase (642 aa).

The region spanning 1–61 (MPVITLPDGS…ENDATLAIIT (61 aa)) is the TGS domain. The catalytic stretch occupies residues 243–534 (DHRKIGKQLD…LTEEFAGFFP (292 aa)). 3 residues coordinate Zn(2+): Cys-334, His-385, and His-511.

It belongs to the class-II aminoacyl-tRNA synthetase family. Homodimer. The cofactor is Zn(2+).

The protein localises to the cytoplasm. It carries out the reaction tRNA(Thr) + L-threonine + ATP = L-threonyl-tRNA(Thr) + AMP + diphosphate + H(+). Functionally, catalyzes the attachment of threonine to tRNA(Thr) in a two-step reaction: L-threonine is first activated by ATP to form Thr-AMP and then transferred to the acceptor end of tRNA(Thr). Also edits incorrectly charged L-seryl-tRNA(Thr). The chain is Threonine--tRNA ligase from Salmonella paratyphi C (strain RKS4594).